Consider the following 46-residue polypeptide: Denclatoxin-B (46 aa).

Cystine bridges form between cysteine 3–cysteine 40, cysteine 4–cysteine 32, and cysteine 16–cysteine 26.

It belongs to the plant thionin (TC 1.C.44) family.

It localises to the secreted. In terms of biological role, thionins are small plant proteins which are toxic to animal cells. They seem to exert their toxic effect at the level of the cell membrane. Their precise function is not known. In Dendrophthora clavata (Columbian mistletoe), this protein is Denclatoxin-B.